Reading from the N-terminus, the 278-residue chain is Putative phosphatase MG265 (278 aa).

D9 (nucleophile) is an active-site residue. D9 provides a ligand contact to Mg(2+). L10 is a binding site for phosphate. D11 provides a ligand contact to Mg(2+). Phosphate-binding positions include 43–44 (SG) and K204. D227 is a Mg(2+) binding site. Position 230 (N230) interacts with phosphate.

The protein belongs to the HAD-like hydrolase superfamily. Cof family. Mg(2+) serves as cofactor.

This Mycoplasma genitalium (strain ATCC 33530 / DSM 19775 / NCTC 10195 / G37) (Mycoplasmoides genitalium) protein is Putative phosphatase MG265.